Consider the following 387-residue polypeptide: Cysteine desulfurase IscS (387 aa).

Pyridoxal 5'-phosphate contacts are provided by residues 73 to 74 (AT), N155, Q183, and 203 to 205 (SAH). K206 is modified (N6-(pyridoxal phosphate)lysine). T241 contacts pyridoxal 5'-phosphate. C328 functions as the Cysteine persulfide intermediate in the catalytic mechanism. C328 is a binding site for [2Fe-2S] cluster.

It belongs to the class-V pyridoxal-phosphate-dependent aminotransferase family. NifS/IscS subfamily. As to quaternary structure, homodimer. Forms a heterotetramer with IscU, interacts with other sulfur acceptors. Requires pyridoxal 5'-phosphate as cofactor.

It is found in the cytoplasm. The catalysed reaction is (sulfur carrier)-H + L-cysteine = (sulfur carrier)-SH + L-alanine. Its pathway is cofactor biosynthesis; iron-sulfur cluster biosynthesis. Functionally, master enzyme that delivers sulfur to a number of partners involved in Fe-S cluster assembly, tRNA modification or cofactor biosynthesis. Catalyzes the removal of elemental sulfur atoms from cysteine to produce alanine. Functions as a sulfur delivery protein for Fe-S cluster synthesis onto IscU, an Fe-S scaffold assembly protein, as well as other S acceptor proteins. This chain is Cysteine desulfurase IscS, found in Helicobacter pylori (strain J99 / ATCC 700824) (Campylobacter pylori J99).